The chain runs to 732 residues: Protein kinase YpkA (732 aa).

The Protein kinase domain maps to 136–408 (VAETDKFAEG…SNEARLHEFL (273 aa)). Residues 142–150 (FAEGESHIS) and lysine 163 each bind ATP. Aspartate 270 serves as the catalytic Proton acceptor.

Belongs to the protein kinase superfamily. Ser/Thr protein kinase family.

It localises to the secreted. The catalysed reaction is L-seryl-[protein] + ATP = O-phospho-L-seryl-[protein] + ADP + H(+). It catalyses the reaction L-threonyl-[protein] + ATP = O-phospho-L-threonyl-[protein] + ADP + H(+). Functionally, acts as a virulence determinant. The sequence is that of Protein kinase YpkA (ypkA) from Yersinia pseudotuberculosis serotype I (strain IP32953).